A 205-amino-acid chain; its full sequence is Glycerol-3-phosphate acyltransferase (205 aa).

6 helical membrane passes run 8 to 28, 57 to 77, 84 to 104, 118 to 138, 143 to 163, and 164 to 184; these read IALF…GYLA, TPAL…ILIA, ESLQ…PVWL, VFLG…LLIL, IVSL…LINS, and KETF…LVLW.

Belongs to the PlsY family. As to quaternary structure, probably interacts with PlsX.

It localises to the cell inner membrane. It carries out the reaction an acyl phosphate + sn-glycerol 3-phosphate = a 1-acyl-sn-glycero-3-phosphate + phosphate. The protein operates within lipid metabolism; phospholipid metabolism. Catalyzes the transfer of an acyl group from acyl-phosphate (acyl-PO(4)) to glycerol-3-phosphate (G3P) to form lysophosphatidic acid (LPA). This enzyme utilizes acyl-phosphate as fatty acyl donor, but not acyl-CoA or acyl-ACP. This Prochlorococcus marinus (strain SARG / CCMP1375 / SS120) protein is Glycerol-3-phosphate acyltransferase.